The following is an 879-amino-acid chain: Fanconi anemia core complex-associated protein 100 (879 aa).

In terms of assembly, belongs to the multisubunit FA complex composed of FANCA, FANCB, FANCC, FANCE, FANCF, FANCG, FANCL/PHF9, FANCM, FAAP24 and FAAP100. Forms a subcomplex with FANCB and FANCL.

The protein resides in the nucleus. Its function is as follows. Plays a role in Fanconi anemia-associated DNA damage response network. Regulates FANCD2 monoubiquitination and the stability of the FA core complex. Induces chromosomal instability as well as hypersensitivity to DNA cross-linking agents, when repressed. This is Fanconi anemia core complex-associated protein 100 from Mus musculus (Mouse).